We begin with the raw amino-acid sequence, 507 residues long: uncharacterized protein (507 aa).

The next 12 helical transmembrane spans lie at 46–66 (WIVLLAVALLNNTNTMSWIGY), 83–103 (AWLSMVYMMCTIPVGMFAMWA), 112–132 (AVLIAGWANGIGAVIRVISSL), 141–161 (FPICMTGQGIAAIAYPFIMFL), 181–201 (IGVMSNPLGVLMANLISPAIV), 207–227 (VIWLNIFTCVPSLIAMLIATF), 263–283 (IILLIVMGGGIGMFNCLYTVM), 299–319 (VCAALMIVGGVFGAAASSIFV), 328–348 (TLKIALGAAVIFGLIFLQLTL), 354–374 (VILGVTCLLFGVLGLATYPIG), 389–409 (TSTGLIVLSGQIQSVIYVFIM), and 442–462 (MSIMIFSLLATLLVLTLVVLF). A compositionally biased stretch (basic and acidic residues) spans 477-493 (ATADKAKELSNQNKDRI). Residues 477–507 (ATADKAKELSNQNKDRITLQAESAVEPLQKK) are disordered.

It is found in the membrane. This is an uncharacterized protein from Caenorhabditis elegans.